Consider the following 114-residue polypeptide: Flagellar hook-basal body complex protein FliE (114 aa).

Belongs to the FliE family.

It is found in the bacterial flagellum basal body. This chain is Flagellar hook-basal body complex protein FliE, found in Burkholderia multivorans (strain ATCC 17616 / 249).